The primary structure comprises 218 residues: Glycoprotein UL1 (218 aa).

Residues 1–27 form the signal peptide; that stretch reads MGVQCNSKLLLLAVLITIILSSILVQA. Residues 178–198 traverse the membrane as a helical segment; it reads VATHVGWTATVVIIICVLTYV.

The protein belongs to the RL11 family.

The protein localises to the virion membrane. This Homo sapiens (Human) protein is Glycoprotein UL1 (UL1).